We begin with the raw amino-acid sequence, 314 residues long: Thymidylate synthase (314 aa).

DUMP is bound by residues Arg-21 and Arg-176–Arg-177. Cys-196 (nucleophile) is an active-site residue. DUMP-binding positions include Arg-216–Asp-219, Asn-227, and His-257–Tyr-259. Asp-219 serves as a coordination point for (6R)-5,10-methylene-5,6,7,8-tetrahydrofolate. Ser-313 lines the (6R)-5,10-methylene-5,6,7,8-tetrahydrofolate pocket.

It belongs to the thymidylate synthase family. Bacterial-type ThyA subfamily. Homodimer.

It localises to the cytoplasm. The enzyme catalyses dUMP + (6R)-5,10-methylene-5,6,7,8-tetrahydrofolate = 7,8-dihydrofolate + dTMP. The protein operates within pyrimidine metabolism; dTTP biosynthesis. Catalyzes the reductive methylation of 2'-deoxyuridine-5'-monophosphate (dUMP) to 2'-deoxythymidine-5'-monophosphate (dTMP) while utilizing 5,10-methylenetetrahydrofolate (mTHF) as the methyl donor and reductant in the reaction, yielding dihydrofolate (DHF) as a by-product. This enzymatic reaction provides an intracellular de novo source of dTMP, an essential precursor for DNA biosynthesis. This Listeria innocua serovar 6a (strain ATCC BAA-680 / CLIP 11262) protein is Thymidylate synthase.